We begin with the raw amino-acid sequence, 554 residues long: CTP synthase (554 aa).

The tract at residues 1 to 265 (MTPLIFVTGG…DELVIDQFKL (265 aa)) is amidoligase domain. S13 contacts CTP. S13 is a binding site for UTP. Residues 14 to 19 (SLGKGI) and D71 each bind ATP. Residues D71 and E139 each coordinate Mg(2+). Residues 146-148 (DIE), 186-191 (KTKPTQ), and K222 contribute to the CTP site. Residues 186–191 (KTKPTQ) and K222 contribute to the UTP site. Residues 292-545 (TIAVVGKYVD…VRAAREKKAG (254 aa)) enclose the Glutamine amidotransferase type-1 domain. G353 lines the L-glutamine pocket. Catalysis depends on C380, which acts as the Nucleophile; for glutamine hydrolysis. Residues 381-384 (YGMQ), E404, and R471 contribute to the L-glutamine site. Catalysis depends on residues H518 and E520.

It belongs to the CTP synthase family. Homotetramer.

It catalyses the reaction UTP + L-glutamine + ATP + H2O = CTP + L-glutamate + ADP + phosphate + 2 H(+). It carries out the reaction L-glutamine + H2O = L-glutamate + NH4(+). The enzyme catalyses UTP + NH4(+) + ATP = CTP + ADP + phosphate + 2 H(+). The protein operates within pyrimidine metabolism; CTP biosynthesis via de novo pathway; CTP from UDP: step 2/2. With respect to regulation, allosterically activated by GTP, when glutamine is the substrate; GTP has no effect on the reaction when ammonia is the substrate. The allosteric effector GTP functions by stabilizing the protein conformation that binds the tetrahedral intermediate(s) formed during glutamine hydrolysis. Inhibited by the product CTP, via allosteric rather than competitive inhibition. Functionally, catalyzes the ATP-dependent amination of UTP to CTP with either L-glutamine or ammonia as the source of nitrogen. Regulates intracellular CTP levels through interactions with the four ribonucleotide triphosphates. The protein is CTP synthase of Xanthomonas campestris pv. campestris (strain 8004).